The chain runs to 204 residues: Outer-membrane lipoprotein carrier protein (204 aa).

An N-terminal signal peptide occupies residues 1–21; sequence MKKYLNLTALLLVGISNVTWA.

This sequence belongs to the LolA family. As to quaternary structure, monomer.

Its subcellular location is the periplasm. In terms of biological role, participates in the translocation of lipoproteins from the inner membrane to the outer membrane. Only forms a complex with a lipoprotein if the residue after the N-terminal Cys is not an aspartate (The Asp acts as a targeting signal to indicate that the lipoprotein should stay in the inner membrane). The chain is Outer-membrane lipoprotein carrier protein from Histophilus somni (strain 2336) (Haemophilus somnus).